We begin with the raw amino-acid sequence, 223 residues long: Urease accessory protein UreF (223 aa).

It belongs to the UreF family. In terms of assembly, ureD, UreF and UreG form a complex that acts as a GTP-hydrolysis-dependent molecular chaperone, activating the urease apoprotein by helping to assemble the nickel containing metallocenter of UreC. The UreE protein probably delivers the nickel.

It is found in the cytoplasm. Required for maturation of urease via the functional incorporation of the urease nickel metallocenter. This is Urease accessory protein UreF from Rhizobium etli (strain ATCC 51251 / DSM 11541 / JCM 21823 / NBRC 15573 / CFN 42).